Consider the following 360-residue polypeptide: GDP-mannose transporter (360 aa).

Over 1–49 the chain is Cytoplasmic; sequence MSSSETKGRNEEDVAEIKKAIATGAVKDPSNLSAIPPIFVVSGANFSMN. The chain crosses the membrane as a helical span at residues 50–67; the sequence is FLLLCIQSSVCCACVFAV. Over 68 to 84 the chain is Lumenal; the sequence is KKLGIISFRDFDMKDAK. A helical transmembrane segment spans residues 85–105; it reads MWFPISFLLVSVIYTGSKSLQ. The Cytoplasmic portion of the chain corresponds to 106-110; sequence YLSIP. Residues 111–131 traverse the membrane as a helical segment; the sequence is VYTIFKNLTIILIAYGEVLWF. Topologically, residues 132–134 are lumenal; sequence GGR. The helical transmembrane segment at 135-155 threads the bilayer; that stretch reads VTALTFVSFIFMVISSIIAAW. Residues 156-164 lie on the Cytoplasmic side of the membrane; the sequence is SDVQSALAS. Residues 165–185 form a helical membrane-spanning segment; the sequence is SIPGASSGVSVGAMQSLFGAL. Residue Arg-186 is a topological domain, lumenal. The helical transmembrane segment at 187-207 threads the bilayer; it reads GLNVGYFWMLVNCLTSAAYVL. At 208–220 the chain is on the cytoplasmic side; it reads SMRKRIKSTGFSD. A helical membrane pass occupies residues 221-241; that stretch reads WDTMFYNNLLSIPVLAVFSLI. At 242-260 the chain is on the lumenal side; it reads AEDWGRENLNRNFPAETRN. Residues 261 to 281 traverse the membrane as a helical segment; the sequence is FLLFAIAFSGAAAVGISYTTA. Over 282–291 the chain is Cytoplasmic; sequence WCVRVTSSTT. Residues 292-312 form a helical membrane-spanning segment; that stretch reads YSMVGALNKLPVAASGMLFFG. Topologically, residues 313–314 are lumenal; the sequence is DP. Residues 315–335 traverse the membrane as a helical segment; sequence VTVGSVSAVGVGFFAGIVYAV. At 336-360 the chain is on the cytoplasmic side; the sequence is AKNNQKKNERRQAADAIIPMASRKP.

This sequence belongs to the TPT transporter family. SLC35D subfamily. In terms of assembly, homooligomer.

It is found in the golgi apparatus membrane. Its subcellular location is the cytoplasmic vesicle membrane. It localises to the endoplasmic reticulum membrane. Its function is as follows. Involved in the import of GDP-mannose from the cytoplasm into the Golgi lumen. The sequence is that of GDP-mannose transporter (VRG4) from Coprinopsis cinerea (strain Okayama-7 / 130 / ATCC MYA-4618 / FGSC 9003) (Inky cap fungus).